Reading from the N-terminus, the 713-residue chain is Signal transducer and activator of transcription 1 (713 aa).

One can recognise an SH2 domain in the interval 477–574 (WCIGFISKHD…EEMLRYFESE (98 aa)).

The protein belongs to the transcription factor STAT family. In terms of assembly, forms a homodimer or a heterodimer with a related family member.

It localises to the cytoplasm. It is found in the nucleus. Its function is as follows. Carries out a dual function: signal transduction and activation of transcription. Activated STAT proteins play a role in repression of dauer formation. Neuronal expression is held in check by negative signals through the TGF-beta pathway that target the daf-3 transcription factor. The polypeptide is Signal transducer and activator of transcription 1 (Caenorhabditis briggsae).